The chain runs to 505 residues: Phase 1 flagellin (505 aa).

The protein belongs to the bacterial flagellin family.

Its subcellular location is the secreted. The protein resides in the bacterial flagellum. Functionally, flagellin is the subunit protein which polymerizes to form the filaments of bacterial flagella. The polypeptide is Phase 1 flagellin (fliC) (Salmonella naestved).